We begin with the raw amino-acid sequence, 242 residues long: Putative serine/threonine-protein kinase (242 aa).

Positions 49-242 constitute a Protein kinase domain; the sequence is FSSKNKVGEG…KSDVYSFGVL (194 aa). ATP-binding positions include 55–63 and Lys77; that span reads VGEGGCGAV. Asp177 acts as the Proton acceptor in catalysis.

This sequence belongs to the protein kinase superfamily. Ser/Thr protein kinase family.

The catalysed reaction is L-seryl-[protein] + ATP = O-phospho-L-seryl-[protein] + ADP + H(+). It carries out the reaction L-threonyl-[protein] + ATP = O-phospho-L-threonyl-[protein] + ADP + H(+). In Helianthus annuus (Common sunflower), this protein is Putative serine/threonine-protein kinase.